Reading from the N-terminus, the 392-residue chain is Putative nickel insertion protein (392 aa).

This sequence belongs to the LarC family.

The sequence is that of Putative nickel insertion protein from Pelobacter propionicus (strain DSM 2379 / NBRC 103807 / OttBd1).